A 273-amino-acid chain; its full sequence is Eukaryotic translation initiation factor 3 subunit J (273 aa).

The disordered stretch occupies residues 1–158 (MPTKKWEDEE…DPSDPSKTVE (158 aa)). Residues 34-54 (DEEANDSDVLDSWDAAEDSEV) show a composition bias toward acidic residues. Residues 50-97 (EDSEVEREKAKKAAEAKAKAEAEAKANKKTKAARINEHKQRRKEAEES) adopt a coiled-coil conformation. The span at 55–75 (EREKAKKAAEAKAKAEAEAKA) shows a compositional bias: basic and acidic residues. Positions 95–104 (EESDESDDET) are enriched in acidic residues. Residues 105 to 126 (ESQRRERLRRTEKEADLAHAED) show a composition bias toward basic and acidic residues.

This sequence belongs to the eIF-3 subunit J family. In terms of assembly, component of the eukaryotic translation initiation factor 3 (eIF-3) complex.

The protein localises to the cytoplasm. In terms of biological role, component of the eukaryotic translation initiation factor 3 (eIF-3) complex, which is involved in protein synthesis of a specialized repertoire of mRNAs and, together with other initiation factors, stimulates binding of mRNA and methionyl-tRNAi to the 40S ribosome. The eIF-3 complex specifically targets and initiates translation of a subset of mRNAs involved in cell proliferation. The sequence is that of Eukaryotic translation initiation factor 3 subunit J from Pyricularia oryzae (strain 70-15 / ATCC MYA-4617 / FGSC 8958) (Rice blast fungus).